The chain runs to 210 residues: MASAKDIKKSILAPVLDNNPIALQVLGVCSALAVTTKLETAFVMTLAVMFVTALSNLFVSLIRNHMPNSVRIIVQMAIIASLVIVVDQVLKAYLYDISKQLSVFVSLIITNCIVMGRAEAFAMKSAPFPSFIDGIGNGLGYGFVLMTVAFFRELLGSGKLFGVEVLPLVSNGGWYQPNGLMLLAPSAFFLIGFMIWAIRILKPEQVEAKE.

A run of 5 helical transmembrane segments spans residues 42–62 (FVMT…VSLI), 72–92 (IIVQ…VLKA), 103–123 (VFVS…AFAM), 131–151 (FIDG…VAFF), and 178–198 (NGLM…IWAI).

This sequence belongs to the NqrDE/RnfAE family. Composed of six subunits; NqrA, NqrB, NqrC, NqrD, NqrE and NqrF.

It localises to the cell inner membrane. The catalysed reaction is a ubiquinone + n Na(+)(in) + NADH + H(+) = a ubiquinol + n Na(+)(out) + NAD(+). Functionally, NQR complex catalyzes the reduction of ubiquinone-1 to ubiquinol by two successive reactions, coupled with the transport of Na(+) ions from the cytoplasm to the periplasm. NqrA to NqrE are probably involved in the second step, the conversion of ubisemiquinone to ubiquinol. The sequence is that of Na(+)-translocating NADH-quinone reductase subunit D from Aliivibrio fischeri (strain ATCC 700601 / ES114) (Vibrio fischeri).